Consider the following 56-residue polypeptide: MQPSYLLLTFAIIFVMVIMYSPAVEAKAGADADADAHADAGCSQFRRMRNLCGGKK.

An N-terminal signal peptide occupies residues 1 to 26 (MQPSYLLLTFAIIFVMVIMYSPAVEA). Positions 27–40 (KAGADADADAHADA) are excised as a propeptide. Position 53 is a glycine amide (glycine 53).

In terms of processing, contains 1 disulfide bond. Expressed by the venom gland.

It localises to the secreted. Venom protein with unknown function. Does not induce paralysis when a high dose is administered by intrathoracic injection into the blowfly Lucilia caesar. This Tetramorium bicarinatum (Tramp ant) protein is U4-myrmicitoxin-Tb1a.